The chain runs to 341 residues: Ketol-acid reductoisomerase (NADP(+)) (341 aa).

Residues 1-182 (MATIYYDKDA…GCTRAGVLET (182 aa)) form the KARI N-terminal Rossmann domain. Residues 25-28 (YGSQ), Ser51, Ser53, and 83-86 (DQTQ) contribute to the NADP(+) site. Residue His108 is part of the active site. Gly134 lines the NADP(+) pocket. In terms of domain architecture, KARI C-terminal knotted spans 183–328 (TFKEETETDL…KRLRDMMSWI (146 aa)). The Mg(2+) site is built by Asp191, Glu195, Glu227, and Glu231. Substrate is bound at residue Ser252.

Belongs to the ketol-acid reductoisomerase family. It depends on Mg(2+) as a cofactor.

The enzyme catalyses (2R)-2,3-dihydroxy-3-methylbutanoate + NADP(+) = (2S)-2-acetolactate + NADPH + H(+). It carries out the reaction (2R,3R)-2,3-dihydroxy-3-methylpentanoate + NADP(+) = (S)-2-ethyl-2-hydroxy-3-oxobutanoate + NADPH + H(+). The protein operates within amino-acid biosynthesis; L-isoleucine biosynthesis; L-isoleucine from 2-oxobutanoate: step 2/4. It participates in amino-acid biosynthesis; L-valine biosynthesis; L-valine from pyruvate: step 2/4. In terms of biological role, involved in the biosynthesis of branched-chain amino acids (BCAA). Catalyzes an alkyl-migration followed by a ketol-acid reduction of (S)-2-acetolactate (S2AL) to yield (R)-2,3-dihydroxy-isovalerate. In the isomerase reaction, S2AL is rearranged via a Mg-dependent methyl migration to produce 3-hydroxy-3-methyl-2-ketobutyrate (HMKB). In the reductase reaction, this 2-ketoacid undergoes a metal-dependent reduction by NADPH to yield (R)-2,3-dihydroxy-isovalerate. The protein is Ketol-acid reductoisomerase (NADP(+)) of Anaeromyxobacter sp. (strain K).